A 422-amino-acid polypeptide reads, in one-letter code: Beta-1,3-galactosyltransferase 2 (422 aa).

Residues 1–24 (MLQWRRRHCCFAKMTWNAKRSLFR) lie on the Cytoplasmic side of the membrane. The chain crosses the membrane as a helical; Signal-anchor for type II membrane protein span at residues 25–45 (THLIGVLSLVFLFAMFLFFNH). At 46–422 (HDWLPGRAGF…AGRYRHRKLH (377 aa)) the chain is on the lumenal side. N-linked (GlcNAc...) asparagine glycans are attached at residues N75, N100, N119, N176, and N226. The segment at 90–110 (TLRPQTATNSNNTDLSPQGVT) is disordered.

This sequence belongs to the glycosyltransferase 31 family. Mn(2+) is required as a cofactor.

It localises to the golgi apparatus membrane. The catalysed reaction is an N-acetyl-beta-D-glucosaminyl derivative + UDP-alpha-D-galactose = a beta-D-galactosyl-(1-&gt;3)-N-acetyl-beta-D-glucosaminyl derivative + UDP + H(+). It catalyses the reaction a beta-D-GlcNAc-(1-&gt;3)-beta-D-Gal-(1-&gt;4)-beta-D-Glc-(1&lt;-&gt;1)-Cer(d18:1(4E)) + UDP-alpha-D-galactose = a beta-D-Gal-(1-&gt;3)-beta-D-GlcNAc-(1-&gt;3)-beta-D-Gal-(1-&gt;4)-beta-D-Glc-(1&lt;-&gt;1')-Cer(d18:1(4E)) + UDP + H(+). The enzyme catalyses a neolactoside IV(3)-beta-GlcNAc-nLc4Cer(d18:1(4E)) + UDP-alpha-D-galactose = a neolactoside IV(3)-beta-[Gal-beta-(1-&gt;3)-GlcNAc]-nLc4Cer(d18:1(4E)) + UDP + H(+). Its pathway is protein modification; protein glycosylation. Its function is as follows. Beta-1,3-galactosyltransferase that transfers galactose from UDP-galactose to substrates with a terminal beta-N-acetylglucosamine (beta-GlcNAc) residue. Can also utilize substrates with a terminal galactose residue, albeit with lower efficiency. Involved in the biosynthesis of the carbohydrate moieties of glycolipids and glycoproteins. Inactive towards substrates with terminal alpha-N-acetylglucosamine (alpha-GlcNAc) or alpha-N-acetylgalactosamine (alpha-GalNAc) residues. This is Beta-1,3-galactosyltransferase 2 (B3GALT2) from Pongo abelii (Sumatran orangutan).